Reading from the N-terminus, the 428-residue chain is Glutamate-1-semialdehyde 2,1-aminomutase (428 aa).

Lys-265 is modified (N6-(pyridoxal phosphate)lysine).

The protein belongs to the class-III pyridoxal-phosphate-dependent aminotransferase family. HemL subfamily. In terms of assembly, homodimer. The cofactor is pyridoxal 5'-phosphate.

Its subcellular location is the cytoplasm. It carries out the reaction (S)-4-amino-5-oxopentanoate = 5-aminolevulinate. It participates in porphyrin-containing compound metabolism; protoporphyrin-IX biosynthesis; 5-aminolevulinate from L-glutamyl-tRNA(Glu): step 2/2. The sequence is that of Glutamate-1-semialdehyde 2,1-aminomutase from Aeromonas salmonicida (strain A449).